The following is a 331-amino-acid chain: Hyaluronidase B (331 aa).

Cystine bridges form between cysteine 19–cysteine 308 and cysteine 185–cysteine 197. N-linked (GlcNAc...) asparagine glycosylation is present at asparagine 79. Residue glutamate 109 is the Proton donor of the active site.

Belongs to the glycosyl hydrolase 56 family. Expressed by the venom gland.

The protein resides in the secreted. It catalyses the reaction Random hydrolysis of (1-&gt;4)-linkages between N-acetyl-beta-D-glucosamine and D-glucuronate residues in hyaluronate.. In terms of biological role, hydrolyzes high molecular weight hyaluronic acid to produce small oligosaccharides. The sequence is that of Hyaluronidase B from Vespa velutina (Asian yellow-legged hornet).